Here is a 64-residue protein sequence, read N- to C-terminus: Conotoxin VnMLCL-05 (64 aa).

Residues 1–19 form the signal peptide; sequence MLCLPVFIILLLLASPAAP. The propeptide occupies 20-43; sequence NPLQTRIQSNLIRAGPEDANIKTD. A Lysine amide modification is found at Lys-63.

The protein belongs to the conotoxin T superfamily. As to expression, expressed by the venom duct.

The protein resides in the secreted. The chain is Conotoxin VnMLCL-05 from Conus ventricosus (Mediterranean cone).